The chain runs to 507 residues: Dihydrolipoyl dehydrogenase 2, mitochondrial (507 aa).

Residues 1–36 constitute a mitochondrion transit peptide; that stretch reads MAMASLARRKAYFLTRNISNSPTDAFRFSFSLTRGF. FAD contacts are provided by residues 73–82, Lys91, Gly155, and 184–186; these read EKRGALGGTC and TGS. A disulfide bridge links Cys82 with Cys87. Residues 221–228, Glu244, Val278, and Gly313 each bind NAD(+); that span reads GAGYIGLE. Residues Asp354 and 360–363 each bind FAD; that span reads MLAH. The Proton acceptor role is filled by His486.

Belongs to the class-I pyridine nucleotide-disulfide oxidoreductase family. Homodimer. Part of both the glycine cleavage system composed of four proteins: P, T, L and H and of the pyruvate dehydrogenase complex containing multiple copies of three enzymatic components: pyruvate dehydrogenase (E1), dihydrolipoamide acetyltransferase (E2) and lipoamide dehydrogenase (E3). FAD serves as cofactor. Post-translationally, S-nytrosylated at unknown positions. In terms of tissue distribution, preferentially expressed in roots, flowers and siliques and at a lower level in stems and leaves.

The protein localises to the mitochondrion matrix. The catalysed reaction is N(6)-[(R)-dihydrolipoyl]-L-lysyl-[protein] + NAD(+) = N(6)-[(R)-lipoyl]-L-lysyl-[protein] + NADH + H(+). Lipoamide dehydrogenase is a component of the glycine decarboxylase (GDC) or glycine cleavage system as well as of the alpha-ketoacid dehydrogenase complexes. LPD1 is probably the protein most often associated with the glycine decarboxylase complex while LPD2 is probably incorporated into alpha-ketoacid dehydrogenase complexes. The polypeptide is Dihydrolipoyl dehydrogenase 2, mitochondrial (LPD2) (Arabidopsis thaliana (Mouse-ear cress)).